We begin with the raw amino-acid sequence, 265 residues long: tRNA pseudouridine synthase A (265 aa).

Asp53 acts as the Nucleophile in catalysis. Tyr111 serves as a coordination point for substrate.

Belongs to the tRNA pseudouridine synthase TruA family. In terms of assembly, homodimer.

The enzyme catalyses uridine(38/39/40) in tRNA = pseudouridine(38/39/40) in tRNA. Its function is as follows. Formation of pseudouridine at positions 38, 39 and 40 in the anticodon stem and loop of transfer RNAs. The sequence is that of tRNA pseudouridine synthase A from Acinetobacter baumannii (strain AB307-0294).